A 67-amino-acid chain; its full sequence is Large ribosomal subunit protein bL35 (67 aa).

This sequence belongs to the bacterial ribosomal protein bL35 family.

The chain is Large ribosomal subunit protein bL35 from Paramagnetospirillum magneticum (strain ATCC 700264 / AMB-1) (Magnetospirillum magneticum).